We begin with the raw amino-acid sequence, 67 residues long: Alpha-conotoxin-like Pu1.1 (67 aa).

Positions 1 to 21 (MGMRMMFTVFLLVVLATTVVS) are cleaved as a signal peptide. A propeptide spanning residues 22-46 (FTSDRTSDGRNAAFNAFDLIALTAR) is cleaved from the precursor. Glutamine 47 carries the post-translational modification Pyrrolidone carboxylic acid. Cystine bridges form between cysteine 49/cysteine 55 and cysteine 50/cysteine 63. Residues 51–53 (NVP) form a lacks the Ser-Xaa-Pro motif that is crucial for potent interaction with nAChR region. Cysteine 63 is modified (cysteine amide).

Belongs to the conotoxin A superfamily. In terms of tissue distribution, expressed by the venom duct.

It localises to the secreted. In terms of biological role, alpha-conotoxins act on postsynaptic membranes, they bind to the nicotinic acetylcholine receptors (nAChR) and thus inhibit them. Has possibly a distinct nAChR binding mode from other alpha-conotoxins, due to a different three residue motif (lacks the Ser-Xaa-Pro motif). This is Alpha-conotoxin-like Pu1.1 from Conus pulicarius (Flea-bitten cone).